Here is a 172-residue protein sequence, read N- to C-terminus: Adenine phosphoribosyltransferase (172 aa).

This sequence belongs to the purine/pyrimidine phosphoribosyltransferase family. As to quaternary structure, homodimer.

The protein localises to the cytoplasm. It carries out the reaction AMP + diphosphate = 5-phospho-alpha-D-ribose 1-diphosphate + adenine. It functions in the pathway purine metabolism; AMP biosynthesis via salvage pathway; AMP from adenine: step 1/1. Its function is as follows. Catalyzes a salvage reaction resulting in the formation of AMP, that is energically less costly than de novo synthesis. This is Adenine phosphoribosyltransferase from Herpetosiphon aurantiacus (strain ATCC 23779 / DSM 785 / 114-95).